Consider the following 702-residue polypeptide: Palmitoyltransferase AKR1 (702 aa).

Over residues 1-40 (MSTDAELQTISGLSVASKSAPSTQTEGVTASGKVESTTNA) the composition is skewed to polar residues. The disordered stretch occupies residues 1 to 51 (MSTDAELQTISGLSVASKSAPSTQTEGVTASGKVESTTNAEEATSDVEEEE). At 1–299 (MSTDAELQTI…TTNLLCFFTP (299 aa)) the chain is on the cytoplasmic side. ANK repeat units follow at residues 49–80 (EEENPLVVAARDGNTAEVKRLCESGSYSVLDT), 83–112 (DGVTALHWAAVNNRISTCQYLVEQGAVVDA), 117–147 (LNGTPLHWACRRGLVYIVHYLIQNGADPLRS), 150–179 (QGYNALHLATHSSNVMLLVYLLHQGLPVDC), 183–212 (NGRTALHWAAYQGDALSVDVLLRWGSDVKI), and 216–245 (QGFLPLHWGIVNGSRNSLARLIEEGSDMYA). 2 helical membrane passes run 300 to 320 (FILILLGLVLCTFCGPIFGII) and 321 to 341 (LTVATLFGSIKLLKTLVLPSL). Residues 342 to 354 (YNGHAALLKSPFQ) are Cytoplasmic-facing. A helical membrane pass occupies residues 355-375 (AGIFTGSAFWVTVKYLTSVLP). At 376 to 379 (ATFA) the chain is on the lumenal side. Residues 380–400 (SHPILNFFFASIFGLAMYCFF) form a helical membrane-spanning segment. Over 401–479 (RCMSMDPGYI…WNAIGVRNHR (79 aa)) the chain is Cytoplasmic. The region spanning 436-486 (HFCFVTYVRKPLRSKFCRQSKRVVARFDHFCPWVWNAIGVRNHRMFVLYVL) is the DHHC domain. Residue Cys-466 is the S-palmitoyl cysteine intermediate of the active site. Residues 480-500 (MFVLYVLFLQIGIPLWLALNS) traverse the membrane as a helical segment. The Lumenal portion of the chain corresponds to 501–518 (AYFGELLEIKRWDPLEFY). Residues 519–539 (LVIWISLQLIWITFLSFVQIF) traverse the membrane as a helical segment. The Cytoplasmic segment spans residues 540–702 (QICRSLTTSE…GEALLAESQV (163 aa)). The tract at residues 679 to 702 (PNQQQTNNRSTREDGEALLAESQV) is disordered.

Belongs to the DHHC palmitoyltransferase family. AKR/ZDHHC17 subfamily.

The protein resides in the early endosome membrane. It localises to the golgi apparatus membrane. It carries out the reaction L-cysteinyl-[protein] + hexadecanoyl-CoA = S-hexadecanoyl-L-cysteinyl-[protein] + CoA. Palmitoyltransferase specific for casein kinase 1. This Yarrowia lipolytica (strain CLIB 122 / E 150) (Yeast) protein is Palmitoyltransferase AKR1 (AKR1).